Consider the following 188-residue polypeptide: dCTP deaminase (188 aa).

DCTP contacts are provided by residues 111-116 (KSTYAR), 135-137 (TLE), glutamine 156, tyrosine 170, and glutamine 180. Residue glutamate 137 is the Proton donor/acceptor of the active site.

This sequence belongs to the dCTP deaminase family. Homotrimer.

It carries out the reaction dCTP + H2O + H(+) = dUTP + NH4(+). It participates in pyrimidine metabolism; dUMP biosynthesis; dUMP from dCTP (dUTP route): step 1/2. Functionally, catalyzes the deamination of dCTP to dUTP. This Legionella pneumophila (strain Paris) protein is dCTP deaminase.